We begin with the raw amino-acid sequence, 336 residues long: MALKHFLNTQDWTCSELNALLTQARAFKHNKLGNALKGKSIALVFFNPSMRTRSSFELGAFQLGGHAIVLQPGKDAWPIEFDTGTVMEAETEEHICEVARVLGHYVDLIGVRAFPKFLDWTYDRQDIVLNSFAKYSPVPVINMETITHPCQELAHIMALQEHFGTTDLRGKKYVLTWTYHPKPLNTAVANSALTIATRLGMDVTLLCPTPDYVLDERYIDWARQNIADTGSTFQVSHDIDNAYRGADVIYAKSWGALPFFGNWAMEKPIRDQYRHFIVDEAKMALTNNAVFSHCLPLRRNVKATDAVMDGSNCIAIHEAGNRLHVQKAIMAALASQ.

Carbamoyl phosphate is bound by residues 49–52 (SMRT), Trp-77, and Arg-112. Glu-144 is a binding site for N(2)-acetyl-L-ornithine. 148–151 (HPCQ) lines the carbamoyl phosphate pocket. N(2)-acetyl-L-ornithine is bound by residues Lys-252 and Leu-295. Carbamoyl phosphate is bound at residue 294–295 (CL). Lys-302 carries the post-translational modification N6-carboxylysine. Carbamoyl phosphate is bound at residue Arg-322.

It belongs to the aspartate/ornithine carbamoyltransferase superfamily. AOTCase family. Homotrimer.

The protein resides in the cytoplasm. The catalysed reaction is N(2)-acetyl-L-ornithine + carbamoyl phosphate = N(2)-acetyl-L-citrulline + phosphate + H(+). It participates in amino-acid biosynthesis; L-arginine biosynthesis. With respect to regulation, carboxylation at Lys-302 increases the catalytic activity of the enzyme. Functionally, catalyzes the transfer of the carbamoyl group from carbamoyl phosphate to the delta-amino group of N(2)-acetyl-L-ornithine to produce N(2)-acetyl-L-citrulline. This is a step in an alternative arginine biosynthesis pathway. The enzyme has no activity with ornithine. This Xylella fastidiosa (strain Temecula1 / ATCC 700964) protein is N-acetylornithine carbamoyltransferase.